The following is a 356-amino-acid chain: Tyrosine recombinase XerS (356 aa).

The Core-binding (CB) domain maps to 16 to 121; the sequence is IMPWYVLDYY…ALSSLYKYLT (106 aa). Residues 169 to 354 enclose the Tyr recombinase domain; that stretch reads AFLDYVDKEY…VNDEQKNALD (186 aa). Active-site residues include arginine 210, lysine 234, histidine 306, arginine 309, and histidine 332. Tyrosine 341 serves as the catalytic O-(3'-phospho-DNA)-tyrosine intermediate.

It belongs to the 'phage' integrase family. XerS subfamily.

The protein resides in the cytoplasm. Its activity is regulated as follows. FtsK is required for recombination. Its function is as follows. Site-specific tyrosine recombinase, which acts by catalyzing the cutting and rejoining of the recombining DNA molecules. Essential to convert dimers of the bacterial chromosome into monomers to permit their segregation at cell division. The protein is Tyrosine recombinase XerS of Streptococcus pyogenes serotype M2 (strain MGAS10270).